The chain runs to 441 residues: Anti-sigma-I factor RsgI (441 aa).

The Cytoplasmic portion of the chain corresponds to 1 to 53; it reads MMNKGIVMDIKKHSVVVLTPNGEFITCKRKGDSCMIGEEISFDEQEQKASRFS. The region spanning 3 to 51 is the RsgI N-terminal anti-sigma domain; the sequence is NKGIVMDIKKHSVVVLTPNGEFITCKRKGDSCMIGEEISFDEQEQKASR. A helical membrane pass occupies residues 54–76; it reads IPYFLKPASLLVACFLCALLFFY. Over 77 to 441 the chain is Extracellular; it reads NQPEEKVFAY…HQQGNEKKNQ (365 aa). Positions 213–441 are disordered; the sequence is ENEKNKSVTP…HQQGNEKKNQ (229 aa). Over residues 219-230 the composition is skewed to polar residues; it reads SVTPPATPSNPV. Positions 240–251 are enriched in low complexity; sequence PDSSPDVVPDLS. Over residues 252-281 the composition is skewed to basic and acidic residues; it reads SVKDKKYEKPEYKEQKKIEEQPTKQIKENN. 3 stretches are compositionally biased toward low complexity: residues 282–328, 336–358, and 366–408; these read GRGS…QQGN, NNGH…QQGN, and NNGH…NGRG. The segment covering 411–428 has biased composition (polar residues); that stretch reads KENVGNEQGNNGRGSQQE. The segment covering 429–441 has biased composition (basic and acidic residues); it reads NRGHQQGNEKKNQ.

Interacts (via RsgI N-terminal anti-sigma domain) with SigI.

The protein resides in the cell membrane. Anti-sigma factor for SigI. Negatively regulates SigI activity through direct interaction. Has no direct effect on virulence gene expression. In Bacillus anthracis, this protein is Anti-sigma-I factor RsgI.